Reading from the N-terminus, the 308-residue chain is ADP-L-glycero-D-manno-heptose-6-epimerase (308 aa).

Residues 10–11, 31–32, lysine 38, lysine 53, 75–79, and asparagine 92 contribute to the NADP(+) site; these read FI, DN, and EGACS. Residue tyrosine 139 is the Proton acceptor of the active site. Position 143 (lysine 143) interacts with NADP(+). Asparagine 168 is a binding site for substrate. NADP(+)-binding residues include valine 169 and lysine 177. The active-site Proton acceptor is lysine 177. Substrate contacts are provided by residues serine 179, histidine 186, 200-203, arginine 208, and tyrosine 271; that span reads FAGS.

This sequence belongs to the NAD(P)-dependent epimerase/dehydratase family. HldD subfamily. In terms of assembly, homopentamer. NADP(+) is required as a cofactor.

It catalyses the reaction ADP-D-glycero-beta-D-manno-heptose = ADP-L-glycero-beta-D-manno-heptose. The protein operates within nucleotide-sugar biosynthesis; ADP-L-glycero-beta-D-manno-heptose biosynthesis; ADP-L-glycero-beta-D-manno-heptose from D-glycero-beta-D-manno-heptose 7-phosphate: step 4/4. Functionally, catalyzes the interconversion between ADP-D-glycero-beta-D-manno-heptose and ADP-L-glycero-beta-D-manno-heptose via an epimerization at carbon 6 of the heptose. The protein is ADP-L-glycero-D-manno-heptose-6-epimerase of Haemophilus influenzae (strain PittGG).